A 174-amino-acid polypeptide reads, in one-letter code: Anthrone oxygenase CPUR_05435 (174 aa).

Transmembrane regions (helical) follow at residues 13 to 33, 56 to 76, 88 to 108, and 140 to 160; these read VALA…AIMI, YGSV…GFAS, CLAA…AMIP, and WVVL…MGFT.

This sequence belongs to the anthrone oxygenase family.

Its subcellular location is the membrane. It catalyses the reaction emodin anthrone + O2 = emodin + H2O + H(+). In terms of biological role, anthrone oxygenase; part of the ergochrome gene cluster responsible for the typical purple-black color of the ergot sclerotia. The ergochrome gene cluster produces several ergot pigments including the yellow ergochrome secalonic acid and its derivatives, as well as the red anthraquinones endocrocin and clavorubin. The pathway begins with the synthesis of atrochrysone thioester by the polyketide synthase (PKS) CPUR_05437. The atrochrysone carboxyl ACP thioesterase CPUR_05436 then breaks the thioester bond and releases the atrochrysone carboxylic acid from CPUR_05437. The decarboxylase CPUR_05434 then catalyzes the concerted decarboxylation-elimination required to convert atochrysone carboxylic acid into emodin anthrone, which is further oxidized to emodin by the anthrone oxygenase CPUR_05435. Emodin is further modified to yield monodictyphenone via several steps involving CPUR_05427, CPUR_05428, CPUR_05429 and CPUR_05430. The short chain dehydrogenase/reductase CPUR_05418 then catalyzes the C-5 ketoreduction to give the xanthone skeleton of the monomeric units. Ergochromes formation requires further dimerization steps of different xanthone units, probably catalyzed by the cytochrome P450 monooxygenase CPUR_05419. CPUR_05425, CPUR_05426 and CPUR_05431 are unique to Claviceps, thus it is likely that they are involved in further modification of xanthone units or in their dimerization. The yellow ergochromes and the red anthraquinone pigments endocrocin and clavorubin are products from the same PKS derived precursors and the latter are likely shunt products in the pathway of xanthone biosynthesis. It is proposed that atrochrysone carboxylic acid released from the PKS CPUR_05437 can also be converted to endocrocin anthrone which is further oxidized into endocrocin by CPUR_05435. Endocrocin could be then modified to clavorubin, possibly by CPUR_05423 and CPUR_05431. Clavorubin is the principal anthraquinone metabolite produced by the cluster with a much higher yield compared to endocrocin. This Claviceps purpurea (strain 20.1) (Ergot fungus) protein is Anthrone oxygenase CPUR_05435.